We begin with the raw amino-acid sequence, 122 residues long: RxLR effector protein Avh52 (122 aa).

The N-terminal stretch at 1–21 (MRLTSILVLVIAATFHTTGTA) is a signal peptide. The RxLR-dEER signature appears at 50 to 68 (RLLRRVEKDKVDYEQDEQR). Positions 69–86 (SFGALKDAVKKLNPVTAV) are TAP1-binding. Residues 87–98 (KKFFKQRARRKK) form a nuclear localization signal (NLS) region.

Belongs to the RxLR effector family. As to quaternary structure, interacts with host acetyl transferase TAP1.

The protein resides in the secreted. It is found in the host nucleus. In terms of biological role, effector that suppresses plant defense responses during the early stages of pathogen infection. Suppresses cell death induced by effectors and PAMPs in plant hosts. Interacts with host acetyltransferase TAP1 and causes TAP1 relocation into the nucleus where it acetylates histones H2A and H3 during early infection, thereby promoting susceptibility of host plant to P.sojae. This chain is RxLR effector protein Avh52, found in Phytophthora sojae (Soybean stem and root rot agent).